We begin with the raw amino-acid sequence, 586 residues long: Arginine--tRNA ligase (586 aa).

A 'HIGH' region motif is present at residues 130–140 (ANPTGPMHVGH).

The protein belongs to the class-I aminoacyl-tRNA synthetase family. Monomer.

It is found in the cytoplasm. It carries out the reaction tRNA(Arg) + L-arginine + ATP = L-arginyl-tRNA(Arg) + AMP + diphosphate. In Methylobacterium sp. (strain 4-46), this protein is Arginine--tRNA ligase.